The sequence spans 573 residues: Ribonuclease J (573 aa).

Positions 1 to 29 (MENQERKPRRRRRRRPQEGSQGGPQDHVE) are disordered. His-93, His-95, Asp-97, His-98, His-168, and Asp-190 together coordinate Zn(2+). Residues 259-261 (ASH) and 390-394 (HASGH) contribute to the substrate site. His-416 is a Zn(2+) binding site.

It belongs to the metallo-beta-lactamase superfamily. RNA-metabolizing metallo-beta-lactamase-like family. Bacterial RNase J subfamily. As to quaternary structure, homodimer. May be a subunit of the RNA degradosome. The cofactor is Zn(2+).

It localises to the cytoplasm. In terms of biological role, an RNase that has endonuclease and possibly 5'-3' exonuclease activity. Probably involved in maturation of rRNA and in some organisms also mRNA maturation and/or decay. This chain is Ribonuclease J, found in Thermus thermophilus (strain ATCC BAA-163 / DSM 7039 / HB27).